We begin with the raw amino-acid sequence, 730 residues long: Dual function macrocyclase-peptidase POPB (730 aa).

Catalysis depends on charge relay system residues S577, D661, and H698.

The protein belongs to the peptidase S9A family. As to quaternary structure, monomer. As to expression, expressed in the pileus (cap) and lamellae where it colocalizes with amanitin.

It catalyses the reaction Hydrolysis of Pro-|-Xaa &gt;&gt; Ala-|-Xaa in oligopeptides.. Functionally, dual function macrocyclase-peptidase involved in the biosynthesis of the highly toxic amanitin toxin family of macrocycles. Cleaves peptide bonds on the C-terminal side of prolyl residues. The enzyme first removes 10 residues from the N-terminus of a 35-residue substrate. Conformational trapping of the 25 amino-acid peptide forces the enzyme to release this intermediate rather than proceed to macrocyclization. The enzyme rebinds the 25 amino-acid peptide in a different conformation and catalyzes macrocyclization of the N-terminal eight residues. The polypeptide is Dual function macrocyclase-peptidase POPB (Amanita bisporigera (Destroying angel)).